Reading from the N-terminus, the 649-residue chain is PTS system mannitol-specific EIICBA component (649 aa).

Residues 13-342 (FGRFLSNMVM…LLMKAQTSTE (330 aa)) enclose the PTS EIIC type-2 domain. 6 helical membrane passes run 25-46 (IGAF…WVPN), 51-71 (SLVG…TGGK), 135-156 (SAGI…PFVK), 166-186 (VNFL…EPAK), 274-293 (AIAG…AGLV), and 314-335 (LGVV…ALLM). The PTS EIIB type-2 domain occupies 384-475 (QSIIVACDAG…LVTQLLAAKR (92 aa)). Residue C390 is the Phosphocysteine intermediate; for EIIB activity of the active site. C390 is modified (phosphocysteine; by EIIA). A PTS EIIA type-2 domain is found at 504–646 (FQLQKENIHL…SDVLSILATS (143 aa)). H564 functions as the Tele-phosphohistidine intermediate; for EIIA activity in the catalytic mechanism. Residue H564 is modified to Phosphohistidine; by HPr.

As to quaternary structure, homodimer. In terms of processing, an intramolecular phosphotransfer takes places between His-564 and Cys-390.

Its subcellular location is the cell inner membrane. It catalyses the reaction D-mannitol(out) + N(pros)-phospho-L-histidyl-[protein] = D-mannitol 1-phosphate(in) + L-histidyl-[protein]. Functionally, the phosphoenolpyruvate-dependent sugar phosphotransferase system (sugar PTS), a major carbohydrate active transport system, catalyzes the phosphorylation of incoming sugar substrates concomitantly with their translocation across the cell membrane. This system is involved in D-mannitol transport. The chain is PTS system mannitol-specific EIICBA component (mtlA) from Vibrio cholerae serotype O1 (strain ATCC 39315 / El Tor Inaba N16961).